The sequence spans 741 residues: Zinc finger protein 425 (741 aa).

The region spanning 1–69 is the KRAB domain; sequence DDVALYFSGQ…EQGCLDKTRR (69 aa). Disordered regions lie at residues 67–86 and 128–169; these read TRRTTSPPTDEQLDMKDTGK and RRDT…TPGR. The span at 132-151 shows a compositional bias: polar residues; sequence FQSPSLQETEIPNKKVSITA. Over residues 153–168 the composition is skewed to basic and acidic residues; that stretch reads DPDKKDLRHKPRETPG. C2H2-type zinc fingers lie at residues 179 to 201, 235 to 257, 263 to 285, 291 to 313, 319 to 341, 347 to 369, 375 to 397, 403 to 425, 431 to 453, 459 to 481, 487 to 509, 515 to 537, 543 to 565, 571 to 593, 599 to 621, 627 to 649, 655 to 677, 683 to 705, and 711 to 733; these read YSCYVCRKVFQVRRDLLKHKRSH, FQCSECEKSYFLKGSLVTHQVVH, YPCPECDKTFRYRANLKKHLCLH, FCCGECGRAFVQQCELTEHLRLH, FQCPQCDRCFRLKRGMKVHLSQH, FHCPECGRSFSRKAALKTHQRTH, FSCDECGRKFIYKIKLDEHIRVH, FSCPECNKSFRLKRSLKAHGLQH, FQCPECSRGFFWRNAMRAHQRLH, FPCAECGKRFTRPSKLACHTRVH, FPCGECKKTFSQQSRLTQHLKVH, FSCAECGRSFRRRAHLTEHTRLH, FQCPECDKSFSWKASMKFHQRMH, FACSECGKTYTHQSQLTEHLRLH, YQCPECQKTFRLKGNLKSHLLQH, FSCVMCGKSFTQQYRLTEHIRVH, FQCPECDKSYCIRGSLKVHLYTH, FQCPECGKGFLQKRSLKAHLCLH, and FSCDECGRSFTYVGALKTHIAVH.

Belongs to the krueppel C2H2-type zinc-finger protein family.

It localises to the nucleus. Its subcellular location is the cytoplasm. Its function is as follows. Acts as a transcriptional repressor. The sequence is that of Zinc finger protein 425 (ZNF425) from Macaca fascicularis (Crab-eating macaque).